The chain runs to 339 residues: UDP-3-O-acylglucosamine N-acyltransferase (339 aa).

His251 serves as the catalytic Proton acceptor.

The protein belongs to the transferase hexapeptide repeat family. LpxD subfamily. In terms of assembly, homotrimer.

The catalysed reaction is a UDP-3-O-[(3R)-3-hydroxyacyl]-alpha-D-glucosamine + a (3R)-hydroxyacyl-[ACP] = a UDP-2-N,3-O-bis[(3R)-3-hydroxyacyl]-alpha-D-glucosamine + holo-[ACP] + H(+). It functions in the pathway bacterial outer membrane biogenesis; LPS lipid A biosynthesis. Catalyzes the N-acylation of UDP-3-O-acylglucosamine using 3-hydroxyacyl-ACP as the acyl donor. Is involved in the biosynthesis of lipid A, a phosphorylated glycolipid that anchors the lipopolysaccharide to the outer membrane of the cell. The chain is UDP-3-O-acylglucosamine N-acyltransferase from Paramagnetospirillum magneticum (strain ATCC 700264 / AMB-1) (Magnetospirillum magneticum).